A 212-amino-acid chain; its full sequence is MSEETKDNQRLQRPAPRLNERILSSLSRRSVAAHPWHDLEIGPGAPQIFNVVVEITKGSKVKYELDKKTGLIKVDRILYSSVVYPHNYGFVPRTLCEDNDPIDVLVIMQEPVLPGCFLRARAIGLMPMIDQGEKDDKIIAVCVDDPEYKHYTDIKELPPHRLSEIRRFFEDYKKNENKEVAVNDFLPSESAVEAIQYSMDLYAEYILHTLRR.

Substrate contacts are provided by Lys62 and Arg76. Tyr84 serves as the catalytic Proton donor. Residue Tyr88 participates in substrate binding. Residues Asp98, Asp103, and Asp135 each coordinate Mg(2+). Tyr172 lines the substrate pocket.

This sequence belongs to the PPase family. Monomer. Mg(2+) serves as cofactor. In terms of tissue distribution, ubiquitous. Lower level of expression in ovary, stigma and pollen.

The protein resides in the cytoplasm. The catalysed reaction is diphosphate + H2O = 2 phosphate + H(+). With respect to regulation, inhibited by Zn(2+), Ca(2+), Ba(2+), Fe(2+), Co(2+), Cu(2+), Eu(2+), Eu(3+) and Mn(2+). In terms of biological role, catalyzes the irreversible hydrolysis of pyrophosphate (PPi) to phosphate. The MgPPi(2-) complex binds to the enzyme only after a free Mg(2+) ion has bound. No activity with glycerol-3-phosphate, glucose-6-phosphate, p-nitrophenylphosphate, ADP, NADP(+), NAD(+),NADH, NADPH or phosphoribosyl pyrophosphate as substrates. Controls the equilibrium of gluconeogenic reactions in the heterotrophic growth phase of early seedling establishment. Determinates the rate of cytosolic glycolysis, providing carbon for seed storage lipid accumulation. This is Soluble inorganic pyrophosphatase 1 from Arabidopsis thaliana (Mouse-ear cress).